The primary structure comprises 471 residues: N(6)-adenine-specific methyltransferase METTL4 (471 aa).

Belongs to the MT-A70-like family.

It localises to the nucleus. It catalyses the reaction a 2'-O-methyladenosine in U2 snRNA + S-adenosyl-L-methionine = an N(6)-methyl-2'-O-methyladenosine in U2 snRNA + S-adenosyl-L-homocysteine + H(+). It carries out the reaction a 2'-deoxyadenosine in DNA + S-adenosyl-L-methionine = an N(6)-methyl-2'-deoxyadenosine in DNA + S-adenosyl-L-homocysteine + H(+). Its function is as follows. N(6)-adenine-specific methyltransferase that can methylate both RNAs and DNA. Acts as a N(6)-adenine-specific RNA methyltransferase by catalyzing formation of N6,2'-O-dimethyladenosine (m6A(m)) on internal positions of U2 small nuclear RNA (snRNA): methylates the 6th position of adenine residues with a pre-deposited 2'-O-methylation. Internal m6A(m) methylation of snRNAs regulates RNA splicing. Also able to act as a N(6)-adenine-specific DNA methyltransferase by mediating methylation of DNA on the 6th position of adenine (N(6)-methyladenosine). The existence of N(6)-methyladenosine (m6A) on DNA is however unclear in mammals, and additional evidences are required to confirm the role of the N(6)-adenine-specific DNA methyltransferase activity of METTL4 in vivo. Acts as a regulator of mitochondrial transcript levels and mitochondrial DNA (mtDNA) copy number by mediating mtDNA N(6)-methylation: m6A on mtDNA reduces transcription by repressing TFAM DNA-binding and bending. N(6)-methyladenosine deposition by METTL4 regulates Polycomb silencing by triggering ubiquitination and degradation of sensor proteins ASXL1 and MPND, leading to inactivation of the PR-DUB complex and subsequent preservation of Polycomb silencing. The chain is N(6)-adenine-specific methyltransferase METTL4 from Mus musculus (Mouse).